We begin with the raw amino-acid sequence, 37 residues long: Large ribosomal subunit protein bL36c (37 aa).

This sequence belongs to the bacterial ribosomal protein bL36 family.

It localises to the plastid. The protein localises to the chloroplast. The sequence is that of Large ribosomal subunit protein bL36c from Welwitschia mirabilis (Tree tumbo).